Reading from the N-terminus, the 473-residue chain is Aspartyl/glutamyl-tRNA(Asn/Gln) amidotransferase subunit B (473 aa).

It belongs to the GatB/GatE family. GatB subfamily. As to quaternary structure, heterotrimer of A, B and C subunits.

It carries out the reaction L-glutamyl-tRNA(Gln) + L-glutamine + ATP + H2O = L-glutaminyl-tRNA(Gln) + L-glutamate + ADP + phosphate + H(+). The enzyme catalyses L-aspartyl-tRNA(Asn) + L-glutamine + ATP + H2O = L-asparaginyl-tRNA(Asn) + L-glutamate + ADP + phosphate + 2 H(+). Allows the formation of correctly charged Asn-tRNA(Asn) or Gln-tRNA(Gln) through the transamidation of misacylated Asp-tRNA(Asn) or Glu-tRNA(Gln) in organisms which lack either or both of asparaginyl-tRNA or glutaminyl-tRNA synthetases. The reaction takes place in the presence of glutamine and ATP through an activated phospho-Asp-tRNA(Asn) or phospho-Glu-tRNA(Gln). The sequence is that of Aspartyl/glutamyl-tRNA(Asn/Gln) amidotransferase subunit B from Wolbachia pipientis subsp. Culex pipiens (strain wPip).